The primary structure comprises 136 residues: Large ribosomal subunit protein uL16 (136 aa).

This sequence belongs to the universal ribosomal protein uL16 family. As to quaternary structure, part of the 50S ribosomal subunit.

Its function is as follows. Binds 23S rRNA and is also seen to make contacts with the A and possibly P site tRNAs. In Alteromonas mediterranea (strain DSM 17117 / CIP 110805 / LMG 28347 / Deep ecotype), this protein is Large ribosomal subunit protein uL16.